The primary structure comprises 95 residues: MRDIHPVSKPCVYNCVTCKKEFIIDSAAKNTEVAIEVCSNCHTFFIGKQNATTTLRGRAEKLNNRFEAGLNNINKKPEKKKIQGKSEPRKSLNEL.

The tract at residues 68–95 (AGLNNINKKPEKKKIQGKSEPRKSLNEL) is disordered. Over residues 80-95 (KKIQGKSEPRKSLNEL) the composition is skewed to basic and acidic residues.

The protein belongs to the bacterial ribosomal protein bL31 family. Type A subfamily. In terms of assembly, part of the 50S ribosomal subunit.

Its function is as follows. Binds the 23S rRNA. This Ureaplasma parvum serovar 3 (strain ATCC 700970) protein is Large ribosomal subunit protein bL31.